Consider the following 269-residue polypeptide: Sulfur carrier protein FdhD (269 aa).

Residue Cys111 is the Cysteine persulfide intermediate of the active site.

It belongs to the FdhD family.

The protein localises to the cytoplasm. Functionally, required for formate dehydrogenase (FDH) activity. Acts as a sulfur carrier protein that transfers sulfur from IscS to the molybdenum cofactor prior to its insertion into FDH. This is Sulfur carrier protein FdhD from Brucella abortus biovar 1 (strain 9-941).